A 756-amino-acid polypeptide reads, in one-letter code: 5-methyltetrahydropteroyltriglutamate--homocysteine methyltransferase (756 aa).

Residues 16–19 and Lys112 contribute to the 5-methyltetrahydropteroyltri-L-glutamate site; that span reads RELK. Residues 432-434 and Glu485 each bind L-homocysteine; that span reads IGS. L-methionine-binding positions include 432 to 434 and Glu485; that span reads IGS. 5-methyltetrahydropteroyltri-L-glutamate contacts are provided by residues 516–517 and Trp562; that span reads RC. Asp600 serves as a coordination point for L-homocysteine. L-methionine is bound at residue Asp600. Glu606 lines the 5-methyltetrahydropteroyltri-L-glutamate pocket. Zn(2+)-binding residues include His642, Cys644, and Glu666. The active-site Proton donor is the His695. Cys727 is a binding site for Zn(2+).

It belongs to the vitamin-B12 independent methionine synthase family. Requires Zn(2+) as cofactor.

The catalysed reaction is 5-methyltetrahydropteroyltri-L-glutamate + L-homocysteine = tetrahydropteroyltri-L-glutamate + L-methionine. Its pathway is amino-acid biosynthesis; L-methionine biosynthesis via de novo pathway; L-methionine from L-homocysteine (MetE route): step 1/1. Functionally, catalyzes the transfer of a methyl group from 5-methyltetrahydrofolate to homocysteine resulting in methionine formation. The protein is 5-methyltetrahydropteroyltriglutamate--homocysteine methyltransferase of Haemophilus influenzae (strain PittEE).